Consider the following 551-residue polypeptide: Glucans biosynthesis protein D (551 aa).

Positions 1 to 32 (MDRRRFIKGSMAMAAVCGTSGIASLFSQAAFA) form a signal peptide, tat-type signal.

Belongs to the OpgD/OpgG family. In terms of processing, predicted to be exported by the Tat system. The position of the signal peptide cleavage has not been experimentally proven.

The protein localises to the periplasm. It participates in glycan metabolism; osmoregulated periplasmic glucan (OPG) biosynthesis. Probably involved in the control of the structural glucose backbone of osmoregulated periplasmic glucans (OPGs). This Escherichia coli O139:H28 (strain E24377A / ETEC) protein is Glucans biosynthesis protein D.